The primary structure comprises 591 residues: Phosphoglucan phosphatase LSF1, chloroplastic (591 aa).

The N-terminal 61 residues, 1–61 (MAFLQQISGL…RRRRVVLRVV (61 aa)), are a transit peptide targeting the chloroplast. Positions 291–453 (RYSKITEQIY…VDDGKHDGTP (163 aa)) constitute a Tyrosine-protein phosphatase domain. Cys-390 acts as the Phosphocysteine intermediate in catalysis. Residue 390–396 (CTTGFDR) participates in substrate binding.

The protein localises to the plastid. It localises to the chloroplast. In terms of biological role, starch granule-associated phosphoglucan phosphatase involved in the control of starch accumulation. Participates in the regulation of the initial steps of starch degradation at the granule surface. May release a different set of phosphate groups from those removed by DSP4. The chain is Phosphoglucan phosphatase LSF1, chloroplastic (LSF1) from Arabidopsis thaliana (Mouse-ear cress).